Here is a 131-residue protein sequence, read N- to C-terminus: Peptide methionine sulfoxide reductase MsrB (131 aa).

The 123-residue stretch at 8–130 (LDEWRSMLDP…NSVCIDLRPR (123 aa)) folds into the MsrB domain. Zn(2+)-binding residues include C47, C50, C96, and C99. C119 acts as the Nucleophile in catalysis.

The protein belongs to the MsrB Met sulfoxide reductase family. Zn(2+) is required as a cofactor.

It carries out the reaction L-methionyl-[protein] + [thioredoxin]-disulfide + H2O = L-methionyl-(R)-S-oxide-[protein] + [thioredoxin]-dithiol. This is Peptide methionine sulfoxide reductase MsrB from Pseudomonas putida (strain ATCC 700007 / DSM 6899 / JCM 31910 / BCRC 17059 / LMG 24140 / F1).